The chain runs to 158 residues: Hypoxanthine DNA glycosylase (158 aa).

Asn39 is an active-site residue.

Belongs to the uracil-DNA glycosylase (UDG) superfamily. Type 6 (HDG) family.

Its function is as follows. Excises hypoxanthine, a deamination product of adenine, from double-stranded DNA. Acts on double-stranded DNA containing G/I, T/I, A/I and C/I base pairs, but not on single-stranded inosine-containing DNA. Also has minor xanthine DNA glycosylase activity. Lacks any detectable uracil-DNA glycosylase activity. The chain is Hypoxanthine DNA glycosylase from Methanosarcina acetivorans (strain ATCC 35395 / DSM 2834 / JCM 12185 / C2A).